A 727-amino-acid chain; its full sequence is Procollagen-lysine,2-oxoglutarate 5-dioxygenase 1 (727 aa).

The first 18 residues, 1–18 (MRPLLLLALLGWLLLAEA), serve as a signal peptide directing secretion. Asn163, Asn197, and Asn538 each carry an N-linked (GlcNAc...) asparagine glycan. Positions 636–727 (QFDLAFVVRY…RYIAVSFVDP (92 aa)) constitute a Fe2OG dioxygenase domain. Fe cation contacts are provided by His656 and Asp658. Residue Asn686 is glycosylated (N-linked (GlcNAc...) asparagine). A Fe cation-binding site is contributed by His708. Arg718 is a catalytic residue.

As to quaternary structure, homodimer. Identified in a complex with P3H3 and P3H4. The cofactor is Fe(2+). It depends on L-ascorbate as a cofactor.

The protein resides in the rough endoplasmic reticulum membrane. The catalysed reaction is L-lysyl-[collagen] + 2-oxoglutarate + O2 = (5R)-5-hydroxy-L-lysyl-[collagen] + succinate + CO2. Its function is as follows. Part of a complex composed of PLOD1, P3H3 and P3H4 that catalyzes hydroxylation of lysine residues in collagen alpha chains and is required for normal assembly and cross-linkling of collagen fibrils. Forms hydroxylysine residues in -Xaa-Lys-Gly- sequences in collagens. These hydroxylysines serve as sites of attachment for carbohydrate units and are essential for the stability of the intermolecular collagen cross-links. This is Procollagen-lysine,2-oxoglutarate 5-dioxygenase 1 (PLOD1) from Homo sapiens (Human).